We begin with the raw amino-acid sequence, 182 residues long: Flagellar transcriptional regulator FlhC (182 aa).

Zn(2+) contacts are provided by C138, C141, C158, and C161.

Belongs to the FlhC family. As to quaternary structure, heterohexamer composed of two FlhC and four FlhD subunits. Each FlhC binds a FlhD dimer, forming a heterotrimer, and a hexamer assembles by dimerization of two heterotrimers. Zn(2+) serves as cofactor.

It localises to the cytoplasm. In terms of biological role, functions in complex with FlhD as a master transcriptional regulator that regulates transcription of several flagellar and non-flagellar operons by binding to their promoter region. Activates expression of class 2 flagellar genes, including fliA, which is a flagellum-specific sigma factor that turns on the class 3 genes. Also regulates genes whose products function in a variety of physiological pathways. The protein is Flagellar transcriptional regulator FlhC of Gallionella capsiferriformans (strain ES-2) (Gallionella ferruginea capsiferriformans (strain ES-2)).